A 101-amino-acid polypeptide reads, in one-letter code: Chaperone modulatory protein CbpM (101 aa).

It belongs to the CbpM family.

Interacts with CbpA and inhibits both the DnaJ-like co-chaperone activity and the DNA binding activity of CbpA. Together with CbpA, modulates the activity of the DnaK chaperone system. Does not inhibit the co-chaperone activity of DnaJ. The chain is Chaperone modulatory protein CbpM from Escherichia coli (strain K12 / MC4100 / BW2952).